The primary structure comprises 157 residues: MILTVKPLQGKECNVQVTENEKVSTVKELVSERLNIPASQQRLLYKGKALADEHRLSDYSIGPEAKLNLVVRPAGERSSGAVGTSSANNDKGGSGVWQLLSTVLAKHFSPADAAKVQEQLIKDYERSLRQLSLDDIERLASRLLHPETEVMDTSYMD.

A Ubiquitin-like domain is found at 1–76; the sequence is MILTVKPLQG…LNLVVRPAGE (76 aa).

Component of the bag6/bat3 complex.

Its subcellular location is the cytoplasm. It localises to the cytosol. It is found in the nucleus. Functionally, as part of a cytosolic protein quality control complex, the bag6/bat3 complex, maintains misfolded and hydrophobic patches-containing proteins in a soluble state and participates in their proper delivery to the endoplasmic reticulum or alternatively can promote their sorting to the proteasome where they undergo degradation. The bag6/bat3 complex is involved in the post-translational delivery of tail-anchored/type II transmembrane proteins to the endoplasmic reticulum membrane. Similarly, the bag6/bat3 complex also functions as a sorting platform for proteins of the secretory pathway that are mislocalized to the cytosol either delivering them to the proteasome for degradation or to the endoplasmic reticulum. The bag6/bat3 complex also plays a role in the endoplasmic reticulum-associated degradation (ERAD), a quality control mechanism that eliminates unwanted proteins of the endoplasmic reticulum through their retrotranslocation to the cytosol and their targeting to the proteasome. It maintains these retrotranslocated proteins in an unfolded yet soluble state condition in the cytosol to ensure their proper delivery to the proteasome. The protein is Ubiquitin-like protein 4A (ubl4a) of Danio rerio (Zebrafish).